A 487-amino-acid chain; its full sequence is GTPase Der (487 aa).

EngA-type G domains are found at residues 3-167 (LTLA…DEME) and 203-378 (LQVA…EVWN). GTP is bound by residues 9–16 (GRPNVGKS), 56–60 (DTAGL), and 119–122 (NKAE). Acidic residues predominate over residues 167–190 (EQQAEEQAPETDVDLDPEDEDGEE). The interval 167-191 (EQQAEEQAPETDVDLDPEDEDGEEV) is disordered. GTP is bound by residues 209–216 (GRPNAGKS), 256–260 (DTAGM), and 321–324 (NKWD). A KH-like domain is found at 379 to 465 (RRIPTAALNR…RLTLRGQGDK (87 aa)). The segment at 458-487 (TLRGQGDKNPYKGRRKKNAGALAKHLKSRG) is disordered. Over residues 468 to 487 (YKGRRKKNAGALAKHLKSRG) the composition is skewed to basic residues.

Belongs to the TRAFAC class TrmE-Era-EngA-EngB-Septin-like GTPase superfamily. EngA (Der) GTPase family. In terms of assembly, associates with the 50S ribosomal subunit.

Functionally, GTPase that plays an essential role in the late steps of ribosome biogenesis. The protein is GTPase Der of Ruegeria pomeroyi (strain ATCC 700808 / DSM 15171 / DSS-3) (Silicibacter pomeroyi).